The sequence spans 246 residues: tRNA (guanine-N(7)-)-methyltransferase (246 aa).

S-adenosyl-L-methionine contacts are provided by glutamate 77, glutamate 102, aspartate 129, and aspartate 152. Residue aspartate 152 is part of the active site. Residues lysine 156, aspartate 188, and threonine 225–glutamate 228 contribute to the substrate site.

This sequence belongs to the class I-like SAM-binding methyltransferase superfamily. TrmB family.

It catalyses the reaction guanosine(46) in tRNA + S-adenosyl-L-methionine = N(7)-methylguanosine(46) in tRNA + S-adenosyl-L-homocysteine. Its pathway is tRNA modification; N(7)-methylguanine-tRNA biosynthesis. In terms of biological role, catalyzes the formation of N(7)-methylguanine at position 46 (m7G46) in tRNA. This chain is tRNA (guanine-N(7)-)-methyltransferase, found in Haemophilus influenzae (strain ATCC 51907 / DSM 11121 / KW20 / Rd).